The primary structure comprises 76 residues: MIYKVFYQETKDSSPRREQTKTLYLDIDAQTELDGRIQARQLVEEKIAYNIELIELLSDKHLEYEKETGAFQLTEF.

The protein belongs to the RNA polymerase subunit epsilon family. RNAP is composed of a core of 2 alpha, a beta and a beta' subunit. The core is associated with a delta subunit, and at least one of epsilon or omega. When a sigma factor is associated with the core the holoenzyme is formed, which can initiate transcription.

It catalyses the reaction RNA(n) + a ribonucleoside 5'-triphosphate = RNA(n+1) + diphosphate. A non-essential component of RNA polymerase (RNAP). This is DNA-directed RNA polymerase subunit epsilon from Streptococcus mutans serotype c (strain ATCC 700610 / UA159).